We begin with the raw amino-acid sequence, 242 residues long: uncharacterized protein (242 aa).

8–15 (TGASGGIG) provides a ligand contact to NADP(+). A substrate-binding site is contributed by S137. The Proton acceptor role is filled by Y150.

It belongs to the short-chain dehydrogenases/reductases (SDR) family.

This is an uncharacterized protein from Bacillus subtilis (strain 168).